The following is a 122-amino-acid chain: Large ribosomal subunit protein bL12 (122 aa).

It belongs to the bacterial ribosomal protein bL12 family. Homodimer. Part of the ribosomal stalk of the 50S ribosomal subunit. Forms a multimeric L10(L12)X complex, where L10 forms an elongated spine to which 2 to 4 L12 dimers bind in a sequential fashion. Binds GTP-bound translation factors.

In terms of biological role, forms part of the ribosomal stalk which helps the ribosome interact with GTP-bound translation factors. Is thus essential for accurate translation. The protein is Large ribosomal subunit protein bL12 of Shewanella denitrificans (strain OS217 / ATCC BAA-1090 / DSM 15013).